A 486-amino-acid chain; its full sequence is Regulatory protein ViaA (486 aa).

This sequence belongs to the ViaA family. In terms of assembly, homodimer. Interacts with RavA.

Its subcellular location is the cytoplasm. Component of the RavA-ViaA chaperone complex, which may act on the membrane to optimize the function of some of the respiratory chains. ViaA stimulates the ATPase activity of RavA. This is Regulatory protein ViaA from Erwinia tasmaniensis (strain DSM 17950 / CFBP 7177 / CIP 109463 / NCPPB 4357 / Et1/99).